We begin with the raw amino-acid sequence, 912 residues long: Metabotropic glutamate receptor 4 (912 aa).

An N-terminal signal peptide occupies residues 1 to 32; the sequence is MSGKGGWAWWWARLPLCLLLSLYAPWVPSSLG. The Extracellular segment spans residues 33-587; that stretch reads KPKGHPHMNS…IVKLEWDSPW (555 aa). Cysteine 67 and cysteine 109 form a disulfide bridge. Residue asparagine 98 is glycosylated (N-linked (GlcNAc...) asparagine). Residues serine 159, 180 to 182, and tyrosine 230 each bind L-glutamate; that span reads AST. 7 disulfide bridges follow: cysteine 249–cysteine 538, cysteine 372–cysteine 388, cysteine 428–cysteine 435, cysteine 520–cysteine 539, cysteine 524–cysteine 542, cysteine 545–cysteine 557, and cysteine 560–cysteine 573. Asparagine 301 carries an N-linked (GlcNAc...) asparagine glycan. Aspartate 312 is an L-glutamate binding site. Position 405 (lysine 405) interacts with L-glutamate. Asparagine 454 and asparagine 484 each carry an N-linked (GlcNAc...) asparagine glycan. An N-linked (GlcNAc...) asparagine glycan is attached at asparagine 569. Residues 588 to 610 form a helical membrane-spanning segment; the sequence is AVLPLFLAVVGIAATLFVVVTFV. Residues 611–624 are Cytoplasmic-facing; sequence RYNDTPIVKASGRE. Residues 625-645 form a helical membrane-spanning segment; that stretch reads LSYVLLAGIFLCYATTFLMIA. Residues 646 to 656 lie on the Extracellular side of the membrane; it reads EPDLGTCSLRR. A helical transmembrane segment spans residues 657–675; that stretch reads IFLGLGMSISYAALLTKTN. Residues 676 to 699 are Cytoplasmic-facing; the sequence is RIYRIFEQGKRSVSAPRFISPASQ. A helical transmembrane segment spans residues 700–720; it reads LAITFILISLQLLGICVWFVV. Residues 721 to 750 lie on the Extracellular side of the membrane; the sequence is DPSHSVVDFQDQRTLDPRFARGVLKCDISD. A helical transmembrane segment spans residues 751-772; the sequence is LSLICLLGYSMLLMVTCTVYAI. The Cytoplasmic segment spans residues 773–785; it reads KTRGVPETFNEAK. A helical membrane pass occupies residues 786–808; sequence PIGFTMYTTCIVWLAFIPIFFGT. At 809–821 the chain is on the extracellular side; the sequence is SQSADKLYIQTTT. The helical transmembrane segment at 822–847 threads the bilayer; sequence LTVSVSLSASVSLGMLYMPKVYIILF. At 848–912 the chain is on the cytoplasmic side; the sequence is HPEQNVPKRK…TYVTYTNHAI (65 aa).

Belongs to the G-protein coupled receptor 3 family. As to quaternary structure, interacts with PICK1. As to expression, is widely distributed in the CNS. Predominant expression is seen in the granule cells of the cerebellum.

The protein resides in the cell membrane. Its function is as follows. G-protein coupled receptor for glutamate. Ligand binding causes a conformation change that triggers signaling via guanine nucleotide-binding proteins (G proteins) and modulates the activity of down-stream effectors. Signaling inhibits adenylate cyclase activity. The protein is Metabotropic glutamate receptor 4 (Grm4) of Rattus norvegicus (Rat).